The following is a 150-amino-acid chain: SsrA-binding protein (150 aa).

The protein belongs to the SmpB family.

The protein localises to the cytoplasm. Required for rescue of stalled ribosomes mediated by trans-translation. Binds to transfer-messenger RNA (tmRNA), required for stable association of tmRNA with ribosomes. tmRNA and SmpB together mimic tRNA shape, replacing the anticodon stem-loop with SmpB. tmRNA is encoded by the ssrA gene; the 2 termini fold to resemble tRNA(Ala) and it encodes a 'tag peptide', a short internal open reading frame. During trans-translation Ala-aminoacylated tmRNA acts like a tRNA, entering the A-site of stalled ribosomes, displacing the stalled mRNA. The ribosome then switches to translate the ORF on the tmRNA; the nascent peptide is terminated with the 'tag peptide' encoded by the tmRNA and targeted for degradation. The ribosome is freed to recommence translation, which seems to be the essential function of trans-translation. The chain is SsrA-binding protein from Borreliella burgdorferi (strain ATCC 35210 / DSM 4680 / CIP 102532 / B31) (Borrelia burgdorferi).